The sequence spans 178 residues: MAPPPPSPPSVTLRTVLLLLRVLTAAFLVITVVLISTNTVTLEVSSTSIKMRFNDVYAYRYMLSAAVIGLLYAVVQLFLTISQFATGTTHPLNYQFNFYGDKIISYLLATGSAAGFGVSKDLKETFLALIEFDSTDPVDKFFSKGYASASLLLFAFVSLAVLSVFSSLALSKRPIQVS.

Topologically, residues 1–14 (MAPPPPSPPSVTLR) are cytoplasmic. The chain crosses the membrane as a helical span at residues 15–35 (TVLLLLRVLTAAFLVITVVLI). Residues 36 to 60 (STNTVTLEVSSTSIKMRFNDVYAYR) are Extracellular-facing. The chain crosses the membrane as a helical span at residues 61–81 (YMLSAAVIGLLYAVVQLFLTI). Over 82–149 (SQFATGTTHP…KFFSKGYASA (68 aa)) the chain is Cytoplasmic. The helical transmembrane segment at 150–170 (SLLLFAFVSLAVLSVFSSLAL) threads the bilayer. The Extracellular segment spans residues 171 to 178 (SKRPIQVS).

Belongs to the Casparian strip membrane proteins (CASP) family. In terms of assembly, homodimer and heterodimers.

It localises to the cell membrane. In Arabidopsis lyrata subsp. lyrata (Lyre-leaved rock-cress), this protein is CASP-like protein 4D1.